We begin with the raw amino-acid sequence, 102 residues long: Large ribosomal subunit protein bL21 (102 aa).

This sequence belongs to the bacterial ribosomal protein bL21 family. Part of the 50S ribosomal subunit. Contacts protein L20.

In terms of biological role, this protein binds to 23S rRNA in the presence of protein L20. This is Large ribosomal subunit protein bL21 from Ehrlichia canis (strain Jake).